The following is a 372-amino-acid chain: Alanine racemase (372 aa).

The Proton acceptor; specific for D-alanine role is filled by K41. At K41 the chain carries N6-(pyridoxal phosphate)lysine. R139 contacts substrate. Residue Y268 is the Proton acceptor; specific for L-alanine of the active site. M316 serves as a coordination point for substrate.

This sequence belongs to the alanine racemase family. The cofactor is pyridoxal 5'-phosphate.

It carries out the reaction L-alanine = D-alanine. Its pathway is amino-acid biosynthesis; D-alanine biosynthesis; D-alanine from L-alanine: step 1/1. Catalyzes the interconversion of L-alanine and D-alanine. May also act on other amino acids. The protein is Alanine racemase (alr) of Borreliella burgdorferi (strain ATCC 35210 / DSM 4680 / CIP 102532 / B31) (Borrelia burgdorferi).